The primary structure comprises 267 residues: Aspartate/glutamate leucyltransferase (267 aa).

Residues 246 to 267 (EQEEQTRPLFRPSATGFSTGQE) form a disordered region.

This sequence belongs to the R-transferase family. Bpt subfamily.

Its subcellular location is the cytoplasm. It carries out the reaction N-terminal L-glutamyl-[protein] + L-leucyl-tRNA(Leu) = N-terminal L-leucyl-L-glutamyl-[protein] + tRNA(Leu) + H(+). It catalyses the reaction N-terminal L-aspartyl-[protein] + L-leucyl-tRNA(Leu) = N-terminal L-leucyl-L-aspartyl-[protein] + tRNA(Leu) + H(+). Functionally, functions in the N-end rule pathway of protein degradation where it conjugates Leu from its aminoacyl-tRNA to the N-termini of proteins containing an N-terminal aspartate or glutamate. The polypeptide is Aspartate/glutamate leucyltransferase (Granulibacter bethesdensis (strain ATCC BAA-1260 / CGDNIH1)).